Reading from the N-terminus, the 880-residue chain is DNA-directed RNA polymerase subunit beta C-terminal section (880 aa).

The protein belongs to the RNA polymerase beta chain family. In terms of assembly, in plastids the minimal PEP RNA polymerase catalytic core is composed of four subunits: alpha, beta, beta', and beta''. When a (nuclear-encoded) sigma factor is associated with the core the holoenzyme is formed, which can initiate transcription.

It localises to the plastid. The protein resides in the chloroplast. It catalyses the reaction RNA(n) + a ribonucleoside 5'-triphosphate = RNA(n+1) + diphosphate. In terms of biological role, DNA-dependent RNA polymerase catalyzes the transcription of DNA into RNA using the four ribonucleoside triphosphates as substrates. In Pleurastrum terricola (Filamentous green alga), this protein is DNA-directed RNA polymerase subunit beta C-terminal section (rpoB2).